Consider the following 156-residue polypeptide: Small ribosomal subunit protein bS16 (156 aa).

Basic and acidic residues predominate over residues 85 to 120; sequence GESGAEGTLKSKSEKEAFVAPERDSVILPEEPKQEE. The tract at residues 85-156 is disordered; it reads GESGAEGTLK…APAEDAEKSE (72 aa). Residues 132 to 150 show a composition bias toward acidic residues; it reads PAEEAAEAPAEEAAEAPAE.

Belongs to the bacterial ribosomal protein bS16 family.

This chain is Small ribosomal subunit protein bS16, found in Micrococcus luteus (strain ATCC 4698 / DSM 20030 / JCM 1464 / CCM 169 / CCUG 5858 / IAM 1056 / NBRC 3333 / NCIMB 9278 / NCTC 2665 / VKM Ac-2230) (Micrococcus lysodeikticus).